We begin with the raw amino-acid sequence, 327 residues long: Glutaminase (327 aa).

Substrate-binding residues include serine 92, asparagine 143, asparagine 195, tyrosine 218, tyrosine 263, and valine 281.

Belongs to the glutaminase family. As to quaternary structure, homotetramer.

It carries out the reaction L-glutamine + H2O = L-glutamate + NH4(+). In Synechocystis sp. (strain ATCC 27184 / PCC 6803 / Kazusa), this protein is Glutaminase.